A 293-amino-acid polypeptide reads, in one-letter code: Pyridoxal 5'-phosphate synthase subunit PdxS (293 aa).

A D-ribose 5-phosphate-binding site is contributed by aspartate 23. Lysine 80 functions as the Schiff-base intermediate with D-ribose 5-phosphate in the catalytic mechanism. Glycine 152 contacts D-ribose 5-phosphate. Residue arginine 164 coordinates D-glyceraldehyde 3-phosphate. D-ribose 5-phosphate contacts are provided by residues glycine 213 and glycine 234–serine 235.

This sequence belongs to the PdxS/SNZ family. In terms of assembly, in the presence of PdxT, forms a dodecamer of heterodimers.

It carries out the reaction aldehydo-D-ribose 5-phosphate + D-glyceraldehyde 3-phosphate + L-glutamine = pyridoxal 5'-phosphate + L-glutamate + phosphate + 3 H2O + H(+). The protein operates within cofactor biosynthesis; pyridoxal 5'-phosphate biosynthesis. Its function is as follows. Catalyzes the formation of pyridoxal 5'-phosphate from ribose 5-phosphate (RBP), glyceraldehyde 3-phosphate (G3P) and ammonia. The ammonia is provided by the PdxT subunit. Can also use ribulose 5-phosphate and dihydroxyacetone phosphate as substrates, resulting from enzyme-catalyzed isomerization of RBP and G3P, respectively. The chain is Pyridoxal 5'-phosphate synthase subunit PdxS from Thermus thermophilus (strain ATCC 27634 / DSM 579 / HB8).